Here is a 1473-residue protein sequence, read N- to C-terminus: Sulfite reductase [NADPH] subunit beta (1473 aa).

Residues 728–876 form the Flavodoxin-like domain; that stretch reads LTILFASDGG…AYNLWEPELW (149 aa). [4Fe-4S] cluster contacts are provided by cysteine 1328, cysteine 1334, cysteine 1373, and cysteine 1377. Cysteine 1377 contributes to the siroheme binding site.

This sequence belongs to the nitrite and sulfite reductase 4Fe-4S domain family. Alpha(2)-beta(2). The alpha component is a flavoprotein, the beta component is a hemoprotein. Requires siroheme as cofactor. It depends on [4Fe-4S] cluster as a cofactor.

It localises to the cytoplasm. It catalyses the reaction hydrogen sulfide + 3 NADP(+) + 3 H2O = sulfite + 3 NADPH + 4 H(+). Its pathway is sulfur metabolism; hydrogen sulfide biosynthesis; hydrogen sulfide from sulfite (NADPH route): step 1/1. Catalyzes the reduction of sulfite to sulfide, one of several activities required for the biosynthesis of L-cysteine from sulfate. This is Sulfite reductase [NADPH] subunit beta (sir1) from Schizosaccharomyces pombe (strain 972 / ATCC 24843) (Fission yeast).